A 52-amino-acid polypeptide reads, in one-letter code: uncharacterized protein (52 aa).

A coiled-coil region spans residues 3–46 (KIQLESSNQSVLKLEERRLNLTAEIERIYGQMDLKRKELENANL).

This is an uncharacterized protein from Dictyostelium discoideum (Social amoeba).